We begin with the raw amino-acid sequence, 280 residues long: 2-dehydro-3-deoxyphosphooctonate aldolase (280 aa).

The protein belongs to the KdsA family.

The protein localises to the cytoplasm. The enzyme catalyses D-arabinose 5-phosphate + phosphoenolpyruvate + H2O = 3-deoxy-alpha-D-manno-2-octulosonate-8-phosphate + phosphate. Its pathway is carbohydrate biosynthesis; 3-deoxy-D-manno-octulosonate biosynthesis; 3-deoxy-D-manno-octulosonate from D-ribulose 5-phosphate: step 2/3. The protein operates within bacterial outer membrane biogenesis; lipopolysaccharide biosynthesis. The protein is 2-dehydro-3-deoxyphosphooctonate aldolase of Thiobacillus denitrificans (strain ATCC 25259 / T1).